Reading from the N-terminus, the 251-residue chain is DNA repair protein RecO (251 aa).

The protein belongs to the RecO family.

Involved in DNA repair and RecF pathway recombination. The chain is DNA repair protein RecO from Lactococcus lactis subsp. cremoris (strain MG1363).